A 214-amino-acid chain; its full sequence is U3 small nucleolar RNA-associated protein 16 (214 aa).

The span at 1–10 shows a compositional bias: basic and acidic residues; it reads MSNGHVKFDA. The disordered stretch occupies residues 1–106; sequence MSNGHVKFDA…KSVNETEVTD (106 aa). The residue at position 16 (Ser16) is a Phosphoserine. The span at 22–41 shows a compositional bias: basic and acidic residues; the sequence is DRQDDVLVISKKDKEVHSSS. The segment covering 42–52 has biased composition (acidic residues); the sequence is DEESDDDDAPQ. Ser45, Ser65, and Ser144 each carry phosphoserine. Residues 54–75 show a composition bias toward basic and acidic residues; it reads EGLHSGKSEVESQITQREEAIR. The segment at 182–214 is disordered; that stretch reads STTQDSKTLPPKKESSIIRSKDRWLNRKALNKG. Positions 192–206 are enriched in basic and acidic residues; sequence PKKESSIIRSKDRWL.

This sequence belongs to the UTP16 family. As to quaternary structure, part of the small subunit (SSU) processome composed of at least 40 protein subunits and the RNA chaperone small nucleolar RNA (snoRNA) U3. Interacts with snoRNA U3. Interacts with MPP10.

Its subcellular location is the nucleus. It localises to the nucleolus. Functions as part of the small subunit (SSU) processome, first precursor of the small eukaryotic ribosomal subunit that coordinates the first two steps of ribosome biogenesis in transcription of the primary transcript pre-RNA and pre-18S processing. During the assembly of the SSU processome in the nucleolus, many ribosome biogenesis factors, an RNA chaperone and ribosomal proteins associate with the nascent pre-rRNA and work in concert to generate RNA folding, modifications, rearrangements and cleavage as well as targeted degradation of pre-ribosomal RNA by the RNA exosome. Has a role in bud site selection maybe via the regulation of expression of bipolar budding components. This Saccharomyces cerevisiae (strain ATCC 204508 / S288c) (Baker's yeast) protein is U3 small nucleolar RNA-associated protein 16 (BUD21).